The chain runs to 652 residues: Phosphomethylpyrimidine synthase (652 aa).

Substrate-binding positions include Asn-235, Met-264, Tyr-293, His-329, 349 to 351 (SRG), 390 to 393 (DGMR), and Glu-429. His-433 is a Zn(2+) binding site. Tyr-456 contributes to the substrate binding site. Position 497 (His-497) interacts with Zn(2+). The [4Fe-4S] cluster site is built by Cys-577, Cys-580, and Cys-585.

Belongs to the ThiC family. As to quaternary structure, homodimer. Requires [4Fe-4S] cluster as cofactor.

The catalysed reaction is 5-amino-1-(5-phospho-beta-D-ribosyl)imidazole + S-adenosyl-L-methionine = 4-amino-2-methyl-5-(phosphooxymethyl)pyrimidine + CO + 5'-deoxyadenosine + formate + L-methionine + 3 H(+). The protein operates within cofactor biosynthesis; thiamine diphosphate biosynthesis. Its function is as follows. Catalyzes the synthesis of the hydroxymethylpyrimidine phosphate (HMP-P) moiety of thiamine from aminoimidazole ribotide (AIR) in a radical S-adenosyl-L-methionine (SAM)-dependent reaction. This is Phosphomethylpyrimidine synthase from Shewanella woodyi (strain ATCC 51908 / MS32).